Here is an 85-residue protein sequence, read N- to C-terminus: MATKKAGGSTRNGRDSEAKRLGVKRFGGESVLAGSIIVRQRGTKFHAGSNVGMGKDHTLFATADGKVKFEVKGEKSRKYVSVVAE.

Residues 1–20 (MATKKAGGSTRNGRDSEAKR) form a disordered region.

The protein belongs to the bacterial ribosomal protein bL27 family.

The chain is Large ribosomal subunit protein bL27 from Histophilus somni (strain 129Pt) (Haemophilus somnus).